Consider the following 116-residue polypeptide: Methionine-R-sulfoxide reductase B1 (116 aa).

Residues 1–106 (MSFCSFFGGE…FSSSLKFVPK (106 aa)) form the MsrB domain. Residues C23, C26, C71, and C74 each coordinate Zn(2+). The active-site Nucleophile is U95. Position 95 (U95) is a non-standard amino acid, selenocysteine.

Belongs to the MsrB Met sulfoxide reductase family. Requires Zn(2+) as cofactor. Truncated MSRB1/SEPX1 proteins produced by failed UGA/Sec decoding are ubiquitinated by the CRL2(FEM1C) E3 ubiquitin-protein ligase complex.

Its subcellular location is the cytoplasm. It localises to the nucleus. The protein localises to the cytoskeleton. The enzyme catalyses L-methionyl-[protein] + [thioredoxin]-disulfide + H2O = L-methionyl-(R)-S-oxide-[protein] + [thioredoxin]-dithiol. It carries out the reaction [thioredoxin]-disulfide + L-methionine + H2O = L-methionine (R)-S-oxide + [thioredoxin]-dithiol. Functionally, methionine-sulfoxide reductase that specifically reduces methionine (R)-sulfoxide back to methionine. While in many cases, methionine oxidation is the result of random oxidation following oxidative stress, methionine oxidation is also a post-translational modification that takes place on specific residue. Acts as a regulator of actin assembly by reducing methionine (R)-sulfoxide mediated by MICALs (MICAL1, MICAL2 or MICAL3) on actin, thereby promoting filament repolymerization. Plays a role in innate immunity by reducing oxidized actin, leading to actin repolymerization in macrophages. This Pongo abelii (Sumatran orangutan) protein is Methionine-R-sulfoxide reductase B1 (MSRB1).